The sequence spans 273 residues: Large ribosomal subunit protein uL2 (273 aa).

A disordered region spans residues 221–262; it reads RGTAMNPVDHPHGGGEGRNFGKHPVTPWGVQTKGKKTRHNKR. Residues 253–262 show a composition bias toward basic residues; it reads KGKKTRHNKR.

It belongs to the universal ribosomal protein uL2 family. As to quaternary structure, part of the 50S ribosomal subunit. Forms a bridge to the 30S subunit in the 70S ribosome.

Its function is as follows. One of the primary rRNA binding proteins. Required for association of the 30S and 50S subunits to form the 70S ribosome, for tRNA binding and peptide bond formation. It has been suggested to have peptidyltransferase activity; this is somewhat controversial. Makes several contacts with the 16S rRNA in the 70S ribosome. The protein is Large ribosomal subunit protein uL2 of Haemophilus ducreyi (strain 35000HP / ATCC 700724).